The chain runs to 456 residues: MADGGSERADGRIVKMEVDYSATVDQRLPECAKLAKEGRLQEVIETLLSLEKQTRTASDMVSTSRILVAVVKMCYEAKEWDLLNENIMLLSKRRSQLKQAVAKMVQQCCTYVEEITDLPIKLRLIDTLRMVTEGKIYVEIERARLTKTLATIKEQNGDVKEAASILQELQVETYGSMEKKERVEFILEQMRLCLAVKDYIRTQIISKKINTKFFQEENTEKLKLKYYNLMIQLDQHEGSYLSICKHYRAIYDTPCIQAESEKWQQALKSVVLYVILAPFDNEQSDLVHRISGDKKLEEIPKYKDLLKLFTTMELMRWSTLVEDYGMELRKGSLESPATDVFGSTEEGEKRWKDLKNRVVEHNIRIMAKYYTRITMKRMAQLLDLSVDESEAFLSNLVVNKTIFAKVDRLAGIINFQRPKDPNNLLNDWSQKLNSLMSLVNKTTHLIAKEEMIHNLQ.

An N-acetylalanine modification is found at Ala2. Lys92 is covalently cross-linked (Glycyl lysine isopeptide (Lys-Gly) (interchain with G-Cter in SUMO1); alternate). Lys92 participates in a covalent cross-link: Glycyl lysine isopeptide (Lys-Gly) (interchain with G-Cter in SUMO2); alternate. Residues Lys221 and Lys368 each carry the N6-acetyllysine modification. The region spanning Ser242–Asp420 is the PCI domain.

It belongs to the proteasome subunit p55 family. In terms of assembly, component of the 19S proteasome regulatory particle complex. The 26S proteasome consists of a 20S core particle (CP) and two 19S regulatory subunits (RP). The regulatory particle is made of a lid composed of 9 subunits including PSMD12, a base containing 6 ATPases and few additional components. Interacts with ERCC6.

Its function is as follows. Component of the 26S proteasome, a multiprotein complex involved in the ATP-dependent degradation of ubiquitinated proteins. This complex plays a key role in the maintenance of protein homeostasis by removing misfolded or damaged proteins, which could impair cellular functions, and by removing proteins whose functions are no longer required. Therefore, the proteasome participates in numerous cellular processes, including cell cycle progression, apoptosis, or DNA damage repair. In Homo sapiens (Human), this protein is 26S proteasome non-ATPase regulatory subunit 12 (PSMD12).